Reading from the N-terminus, the 90-residue chain is DNA-binding protein HU-beta (90 aa).

This sequence belongs to the bacterial histone-like protein family. In terms of assembly, heterodimer of an alpha and a beta chain.

Functionally, histone-like DNA-binding protein which is capable of wrapping DNA to stabilize it, and thus to prevent its denaturation under extreme environmental conditions. This is DNA-binding protein HU-beta (hupB) from Salmonella typhi.